The primary structure comprises 82 residues: Small ribosomal subunit protein bS16 (82 aa).

Belongs to the bacterial ribosomal protein bS16 family.

The polypeptide is Small ribosomal subunit protein bS16 (Deinococcus geothermalis (strain DSM 11300 / CIP 105573 / AG-3a)).